Consider the following 227-residue polypeptide: Prolactin (227 aa).

A signal peptide spans 1 to 28 (MNIKGSPWKGSLLLLLVSNLLLCQNVAP). A disulfide bridge links C32 with C39. Position 54 is a phosphoserine (S54). Residue N59 is glycosylated (N-linked (GlcNAc...) asparagine). A phosphoserine mark is found at S62 and S118. Disulfide bonds link C86–C202 and C219–C227.

Belongs to the somatotropin/prolactin family. Interacts with PRLR.

It is found in the secreted. Its function is as follows. Prolactin acts primarily on the mammary gland by promoting lactation. The sequence is that of Prolactin (PRL) from Macaca mulatta (Rhesus macaque).